Consider the following 947-residue polypeptide: Translation initiation factor IF-2 (947 aa).

The tract at residues 47-332 (LRESFGGGKS…RGRKSKRAKR (286 aa)) is disordered. Positions 86–95 (APDRSLDAAL) are enriched in basic and acidic residues. Residues 105–123 (APVPAPAPAPTPAPAPAPA) show a composition bias toward pro residues. Over residues 131–145 (APPAATPAAPAASAA) the composition is skewed to low complexity. Composition is skewed to pro residues over residues 146–171 (PAPPKAPLPGQRPAPTPGKPAAPQAP) and 210–225 (PRPQAPRPGAPRPGAP). Over residues 255-318 (RPGGGRPGGP…GAAGAFGRPG (64 aa)) the composition is skewed to gly residues. The segment covering 322-331 (RRGRKSKRAK) has biased composition (basic residues). Positions 443 to 614 (TRPPVVTVMG…AVLLTADAAL (172 aa)) constitute a tr-type G domain. Residues 452-459 (GHVDHGKT) form a G1 region. GTP is bound at residue 452 to 459 (GHVDHGKT). The G2 stretch occupies residues 477 to 481 (GITQH). The interval 502–505 (DTPG) is G3. Residues 502–506 (DTPGH) and 556–559 (NKID) contribute to the GTP site. The interval 556–559 (NKID) is G4. Residues 592 to 594 (SAK) are G5.

Belongs to the TRAFAC class translation factor GTPase superfamily. Classic translation factor GTPase family. IF-2 subfamily.

The protein resides in the cytoplasm. In terms of biological role, one of the essential components for the initiation of protein synthesis. Protects formylmethionyl-tRNA from spontaneous hydrolysis and promotes its binding to the 30S ribosomal subunits. Also involved in the hydrolysis of GTP during the formation of the 70S ribosomal complex. This chain is Translation initiation factor IF-2, found in Mycobacterium marinum (strain ATCC BAA-535 / M).